The sequence spans 751 residues: Phosphate transporter PHO1 homolog 8 (751 aa).

Residues 1-299 (MKFGKEYVAQ…LRNAAKLYME (299 aa)) form the SPX domain. Residues 1–351 (MKFGKEYVAQ…KVTKEKHRIT (351 aa)) are Cytoplasmic-facing. The chain crosses the membrane as a helical span at residues 352 to 372 (FSTGFFVGCTVSLVIALGLFI). Residues 373 to 392 (HARNIMGAVGHKLYMETMFP) are Extracellular-facing. Residues 393 to 413 (LYSLFAFVVLHMIMYASNIYF) traverse the membrane as a helical segment. Residues 414 to 434 (WKRYRVNYPFIFGFKEGTELG) are Cytoplasmic-facing. The helical transmembrane segment at 435 to 455 (YGHVLLLSFGLGTLALCAVLV) threads the bilayer. Over 456 to 473 (NMDMEMDPNTNDYKTITE) the chain is Extracellular. A helical transmembrane segment spans residues 474 to 494 (LVPLFVVALVIAISVCPFNIF). The Cytoplasmic portion of the chain corresponds to 495 to 623 (YRSSRFFFLM…FSINRGNDWK (129 aa)). Residues 558-751 (KSSDVYSTFY…NYDEEEDRDS (194 aa)) form the EXS domain. The helical transmembrane segment at 624–644 (IAAWVFSGLATFYGTYWDIVY) threads the bilayer. At 645 to 667 (DWGLLHRPSKSWLREKLLVPHKS) the chain is on the extracellular side. A helical membrane pass occupies residues 668–688 (VYYVAMVVNVVLRLAWLQTVL). Residues 689-751 (DFNISFLHRE…NYDEEEDRDS (63 aa)) lie on the Cytoplasmic side of the membrane.

It belongs to the SYG1 (TC 2.A.94) family. Expressed in root epidermis, leaf hydathodes, trichomes and petioles, stem vascular cylinder, receptacle, stigma apex and pollen grains.

It is found in the cell membrane. In terms of biological role, may transport inorganic phosphate (Pi). The polypeptide is Phosphate transporter PHO1 homolog 8 (PHO1-H8) (Arabidopsis thaliana (Mouse-ear cress)).